Reading from the N-terminus, the 343-residue chain is Galactoside alpha-(1,2)-fucosyltransferase 2 (343 aa).

The Cytoplasmic portion of the chain corresponds to 1–14 (MLVVQMPFSFPMAH). A helical; Signal-anchor for type II membrane protein transmembrane segment spans residues 15 to 28 (FILFVFTVSTIFHV). Residues 29–343 (QQRLAKIQAM…AADLSPLLKH (315 aa)) are Lumenal-facing. N-linked (GlcNAc...) asparagine glycans are attached at residues Asn-188, Asn-282, and Asn-308.

Belongs to the glycosyltransferase 11 family.

The protein localises to the golgi apparatus. It localises to the golgi stack membrane. It catalyses the reaction a beta-D-galactosyl-(1-&gt;3)-N-acetyl-beta-D-glucosaminyl derivative + GDP-beta-L-fucose = an alpha-L-Fuc-(1-&gt;2)-beta-D-Gal-(1-&gt;3)-beta-D-GlcNAc derivative + GDP + H(+). The enzyme catalyses a beta-D-galactosyl-(1-&gt;4)-N-acetyl-beta-D-glucosaminyl derivative + GDP-beta-L-fucose = an alpha-L-Fuc-(1-&gt;2)-beta-D-Gal-(1-&gt;4)-beta-D-GlcNAc derivative + GDP + H(+). It carries out the reaction a neolactoside nLc4Cer + GDP-beta-L-fucose = a neolactoside IV(2)-alpha-Fuc-nLc4Cer + GDP + H(+). The catalysed reaction is a neolactoside nLc4Cer(d18:1(4E)) + GDP-beta-L-fucose = a neolactoside IV(2)-alpha-Fuc-nLc4Cer(d18:1(4E)) + GDP + H(+). It catalyses the reaction a ganglioside GM1 + GDP-beta-L-fucose = a ganglioside Fuc-GM1 + GDP + H(+). The enzyme catalyses a ganglioside GA1 + GDP-beta-L-fucose = a ganglioside Fuc-GA1 + GDP + H(+). It carries out the reaction Lc4Cer + GDP-beta-L-fucose = alpha-L-fucosyl-(1-&gt;2)-beta-D-galactosyl-(1-&gt;3)-N-acetyl-beta-D-glucosaminyl-(1-&gt;3)-beta-D-galactosyl-(1-&gt;4)-beta-D-glucosyl-(1&lt;-&gt;1')-ceramide + GDP + H(+). The catalysed reaction is a beta-D-Gal-(1-&gt;3)-beta-D-GlcNAc-(1-&gt;3)-beta-D-Gal-(1-&gt;4)-beta-D-Glc-(1&lt;-&gt;1')-Cer(d18:1(4E)) + GDP-beta-L-fucose = alpha-L-fucosyl-(1-&gt;2)- beta-D-galactosyl-(1-&gt;3)-N-acetyl-beta-D-glucosaminyl-(1-&gt;3)-beta-D-galactosyl-(1-&gt;4)-beta-D-glucosyl-(1&lt;-&gt;1')-N-acylsphing-4-enine + GDP + H(+). It catalyses the reaction a ganglioside GD1b + GDP-beta-L-fucose = a ganglioside Fuc-GD1b + GDP + H(+). The enzyme catalyses a ganglioside GM1 (d18:1(4E)) + GDP-beta-L-fucose = a ganglioside Fuc-GM1 (d18:1(4E)) + GDP + H(+). It carries out the reaction a globoside GalGb4Cer (d18:1(4E)) + GDP-beta-L-fucose = a globoside Globo-H (d18:1(4E)) + GDP + H(+). The catalysed reaction is a lactoside III(4)-a-Fuc-Lc4Cer + GDP-beta-L-fucose = a lactoside IV(2),III(4)-a-[Fuc]2-Lc4Cer + GDP + H(+). It catalyses the reaction beta-D-galactosyl-(1-&gt;3)-N-acetyl-D-galactosamine + GDP-beta-L-fucose = alpha-L-fucosyl-(1-&gt;2)-beta-D-galactosyl-(1-&gt;3)-N-acetyl-D-galactosamine + GDP + H(+). Its pathway is protein modification; protein glycosylation. Functionally, catalyzes the transfer of L-fucose, from a guanosine diphosphate-beta-L-fucose, to the terminal galactose on both O- and N-linked glycans chains of cell surface glycoproteins and glycolipids and the resulting epitope regulates several processes such as cell-cell interaction including host-microbe interaction, cell surface expression and cell proliferation. Preferentially fucosylates gangliosides GA1 and GM1 in the antrum, cecum and colon and in the female reproductive organs. Fucosylated host glycoproteins or glycolipids mediate interaction with intestinal microbiota influencing its composition. Creates a soluble precursor oligosaccharide FuC-alpha ((1,2)Galbeta-) called the H antigen which is an essential substrate for the final step in the soluble ABO blood group antigen synthesis pathway. The protein is Galactoside alpha-(1,2)-fucosyltransferase 2 of Hylobates lar (Lar gibbon).